Consider the following 123-residue polypeptide: MKSIGRQDRVAGRIQQELSALIQKRINDPRLEWATITGVKMTKDLKIARVYYCVFGEEEKKIKVGEAFQQAHGFIKRELAKKLGLRYMPELEFFFDESFDYGRKIESILREIGPLDSPEEPEE.

The protein belongs to the RbfA family. Monomer. Binds 30S ribosomal subunits, but not 50S ribosomal subunits or 70S ribosomes.

Its subcellular location is the cytoplasm. Functionally, one of several proteins that assist in the late maturation steps of the functional core of the 30S ribosomal subunit. Associates with free 30S ribosomal subunits (but not with 30S subunits that are part of 70S ribosomes or polysomes). Required for efficient processing of 16S rRNA. May interact with the 5'-terminal helix region of 16S rRNA. The sequence is that of Ribosome-binding factor A from Desulfatibacillum aliphaticivorans.